We begin with the raw amino-acid sequence, 336 residues long: Aspartate--ammonia ligase (336 aa).

It belongs to the class-II aminoacyl-tRNA synthetase family. AsnA subfamily.

The protein localises to the cytoplasm. It catalyses the reaction L-aspartate + NH4(+) + ATP = L-asparagine + AMP + diphosphate + H(+). It participates in amino-acid biosynthesis; L-asparagine biosynthesis; L-asparagine from L-aspartate (ammonia route): step 1/1. In Ruminiclostridium cellulolyticum (strain ATCC 35319 / DSM 5812 / JCM 6584 / H10) (Clostridium cellulolyticum), this protein is Aspartate--ammonia ligase.